The sequence spans 115 residues: uncharacterized protein (115 aa).

3 consecutive transmembrane segments (helical) span residues 10–30 (IAILVFLMVIGFFIFIGSFWL), 47–67 (ASGIILTIFPNINSWFNATVA), and 77–97 (VHFFIPVGFGLLFGLIIAIIV).

It is found in the cell membrane. This is an uncharacterized protein from Mycoplasma genitalium (strain ATCC 33530 / DSM 19775 / NCTC 10195 / G37) (Mycoplasmoides genitalium).